Reading from the N-terminus, the 280-residue chain is Biotin carboxyl carrier protein of acetyl-CoA carboxylase 1, chloroplastic (280 aa).

A chloroplast-targeting transit peptide spans 1–82 (MASSSFSVTS…SNAAKVDGPS (82 aa)). Residues 52-75 (PSRSSYPVVKAQSNKVSTGASSNA) are compositionally biased toward polar residues. 2 disordered regions span residues 52–106 (PSRS…ATEE) and 164–215 (QPSY…GTFY). Low complexity predominate over residues 177-188 (PAAAAPAPSTPA). Positions 189 to 198 (SLPPPSPPTP) are enriched in pro residues. The Biotinyl-binding domain maps to 203 to 279 (LPTVKSPMAG…SLDTPLFVVQ (77 aa)). N6-biotinyllysine is present on K245.

Acetyl-CoA carboxylase is a heterohexamer composed of biotin carboxyl carrier protein, biotin carboxylase and 2 subunits each of ACCase subunit alpha and ACCase plastid-coded subunit beta (accD). As to expression, present in developing tissues from roots, leaves, flowers, siliques and seeds (at protein level).

The protein resides in the plastid. It is found in the chloroplast. Its pathway is lipid metabolism; fatty acid biosynthesis. Its function is as follows. This protein is a component of the acetyl coenzyme A carboxylase complex; first, biotin carboxylase catalyzes the carboxylation of the carrier protein and then the transcarboxylase transfers the carboxyl group to form malonyl-CoA. This Arabidopsis thaliana (Mouse-ear cress) protein is Biotin carboxyl carrier protein of acetyl-CoA carboxylase 1, chloroplastic (BCCP1).